A 440-amino-acid polypeptide reads, in one-letter code: Chromosomal replication initiator protein DnaA (440 aa).

Residues 1–69 are domain I, interacts with DnaA modulators; the sequence is MKERILQEIK…VKVVLGNDAT (69 aa). The domain II stretch occupies residues 69-96; the sequence is TFEITYEAFEPHSSYSEPLVKKRAVLLT. The interval 97-313 is domain III, AAA+ region; sequence PLNPDYTFEN…GAIIKLLVYK (217 aa). ADP contacts are provided by valine 108, asparagine 113, glycine 140, leucine 141, glycine 142, lysine 143, threonine 144, histidine 145, and arginine 300. Glycine 140 contacts ATP. Residues glycine 142, lysine 143, and threonine 144 each contribute to the ATP site. Residue threonine 144 coordinates Mg(2+). Residues 314–440 form a domain IV, binds dsDNA region; the sequence is ETTGKEVDLK…GEISRRALSG (127 aa).

Belongs to the DnaA family. Oligomerizes as a right-handed, spiral filament on DNA at oriC.

Its subcellular location is the cytoplasm. In terms of biological role, plays an essential role in the initiation and regulation of chromosomal replication. ATP-DnaA binds to the origin of replication (oriC) to initiate formation of the DNA replication initiation complex once per cell cycle. Binds the DnaA box (a 9 base pair repeat at the origin) and separates the double-stranded (ds)DNA. Forms a right-handed helical filament on oriC DNA; dsDNA binds to the exterior of the filament while single-stranded (ss)DNA is stabiized in the filament's interior. The ATP-DnaA-oriC complex binds and stabilizes one strand of the AT-rich DNA unwinding element (DUE), permitting loading of DNA polymerase. After initiation quickly degrades to an ADP-DnaA complex that is not apt for DNA replication. Binds acidic phospholipids. Its function is as follows. The DnaA box consensus is 5'-[ATC][AT]AC[CT]TACCA[CT][CTA]-3' in this bacterium. Mutagenesis of residues that line the central pore blocks dsDNA separation. The chain is Chromosomal replication initiator protein DnaA from Thermotoga maritima (strain ATCC 43589 / DSM 3109 / JCM 10099 / NBRC 100826 / MSB8).